A 429-amino-acid polypeptide reads, in one-letter code: Phosphoglucosamine mutase (429 aa).

Ser96 functions as the Phosphoserine intermediate in the catalytic mechanism. 4 residues coordinate Mg(2+): Ser96, Asp230, Asp232, and Asp234. Position 96 is a phosphoserine (Ser96).

Belongs to the phosphohexose mutase family. It depends on Mg(2+) as a cofactor. Activated by phosphorylation.

The catalysed reaction is alpha-D-glucosamine 1-phosphate = D-glucosamine 6-phosphate. Its function is as follows. Catalyzes the conversion of glucosamine-6-phosphate to glucosamine-1-phosphate. The sequence is that of Phosphoglucosamine mutase from Thermotoga maritima (strain ATCC 43589 / DSM 3109 / JCM 10099 / NBRC 100826 / MSB8).